Here is a 189-residue protein sequence, read N- to C-terminus: DAN domain family member 5 (189 aa).

The signal sequence occupies residues 1-22 (MLLGQLSTLLCLLSGALPTGSG). The N-linked (GlcNAc...) asparagine glycan is linked to Asn-38. 4 cysteine pairs are disulfide-bonded: Cys-101–Cys-148, Cys-115–Cys-162, Cys-125–Cys-183, and Cys-129–Cys-185. One can recognise a CTCK domain in the interval 101–186 (CKAVPFVQVF…TMLIEGCHCS (86 aa)).

Belongs to the DAN family. In terms of tissue distribution, expressed in the retina, in inner segments of photoreceptors, at or close to the outer plexiform layer and in the ganglion cell layer (at protein level).

It is found in the secreted. Functionally, antagonist of the extracellular signaling protein NODAL, which is required for correct left-right patterning during embryonic development. Antagonist of BMP and TGF-beta signaling. Independently of its role in left-right axis establishment, plays a role during heart development, possibly through the regulation of TGF-beta/Nodal signaling pathway. Displays anti-angiogenic activity by inhibiting endothelial sprouting, migration, and proliferation. Once internalized by endothelial cells, may alter their redox and glycolytic balance. This chain is DAN domain family member 5 (DAND5), found in Homo sapiens (Human).